Consider the following 477-residue polypeptide: Bile acid transporter (477 aa).

Transmembrane regions (helical) follow at residues 13–33, 50–70, 83–103, 107–127, 139–159, 166–186, 206–226, 228–248, 272–292, 301–321, 333–353, 359–379, 381–401, 406–426, and 444–464; these read FVPFAIAALLVSLIGGFTAVL, WISLALAMSSAACAPILGKLG, IVIFAAGNVLTAVATSLIFML, FIVGIGTAAISPIVMAYIVTE, LYMLISSGAVVVGPTCGGLIM, VMMWVCVALCVVVFLICTFSI, LVVVFFSLFLCIPSFGQNIGW, STAFIAAAAVALVALFILVMV, LILFLTQGLMMANMTNVIVFV, IISSFAISIMYIGMSLGSVII, VLTFSLVLTAIGCALMYLFKA, IFAASLGILGFGLGGNATIFM, VALSGLSSEVAGSGTGTYGLF, APFGVAVFVPMFANGVTANIA, and ISSIQTLTLVELGCIVVGIIL.

It belongs to the major facilitator superfamily.

The protein resides in the cell membrane. The protein operates within lipid metabolism; bile acid degradation. This chain is Bile acid transporter (baiG), found in Clostridium scindens (strain JCM 10418 / VPI 12708).